The chain runs to 242 residues: Endoglucanase-5 (242 aa).

The first 17 residues, 1-17 (MKATLVLGSLIVGAVSA), serve as a signal peptide directing secretion. Residues 18-182 (YKATTTRYYD…ETDPTPVLGN (165 aa)) form a catalytic region. Asp-27 functions as the Nucleophile in the catalytic mechanism. The active-site Proton donor is Asp-134. Residues 177 to 206 (TPVLGNDTGSTPPGSSPPATSSSPPSGGGQ) form a disordered region. N-linked (GlcNAc...) asparagine glycosylation is present at Asn-182. Over residues 184-201 (TGSTPPGSSPPATSSSPP) the composition is skewed to low complexity. The 37-residue stretch at 205–241 (GQQTLYGQCGGAGWTGPTTCQAPGTCKVQNQWYSQCL) folds into the CBM1 domain. 2 disulfides stabilise this stretch: Cys-213-Cys-230 and Cys-224-Cys-240.

Belongs to the glycosyl hydrolase 45 (cellulase K) family.

It carries out the reaction Endohydrolysis of (1-&gt;4)-beta-D-glucosidic linkages in cellulose, lichenin and cereal beta-D-glucans.. In Hypocrea jecorina (Trichoderma reesei), this protein is Endoglucanase-5 (egl5).